Consider the following 174-residue polypeptide: Small ribosomal subunit protein uS7c (174 aa).

The protein belongs to the universal ribosomal protein uS7 family. In terms of assembly, part of the 30S ribosomal subunit.

The protein resides in the plastid. It localises to the chloroplast. Functionally, one of the primary rRNA binding proteins, it binds directly to 16S rRNA where it nucleates assembly of the head domain of the 30S subunit. The chain is Small ribosomal subunit protein uS7c (rps7) from Stigeoclonium helveticum (Green alga).